A 1179-amino-acid polypeptide reads, in one-letter code: Tubulin glycylase 3B (1179 aa).

Residues 177 to 199 show a composition bias toward polar residues; it reads NKGQTNNSNRENGGNFHSEQSPK. Disordered stretches follow at residues 177–208, 250–278, 592–625, and 853–890; these read NKGQ…VVSG, QQPQ…LPLS, KVLS…AVQQ, and QKQH…LKQD. The span at 592–601 shows a compositional bias: basic and acidic residues; sequence KVLSNTKSKD. 2 stretches are compositionally biased toward polar residues: residues 614 to 625 and 881 to 890; these read KSKSNNQNAVQQ and AQSSTSLKQD. The TTL domain maps to 790 to 1152; sequence FIDFYETVDF…SMAKKGTKKN (363 aa). ATP contacts are provided by residues 965–968, Lys978, and Asp980; that span reads QKYI.

It is found in the cell projection. The protein localises to the cilium. The protein resides in the cytoplasm. It localises to the cytoskeleton. Its subcellular location is the cilium axoneme. Functionally, polyglycylase which modifies tubulin, generating side chains of glycine on the gamma-carboxyl groups of specific glutamate residues within the C-terminal tail of tubulin. Polyglycylates tubulin, with a preference for alpha-tubulin toward beta-tubulin. In Tetrahymena thermophila (strain SB210), this protein is Tubulin glycylase 3B (TTLL3B).